A 157-amino-acid chain; its full sequence is Small ribosomal subunit protein uS7 (157 aa).

Belongs to the universal ribosomal protein uS7 family. Part of the 30S ribosomal subunit. Contacts proteins S9 and S11.

In terms of biological role, one of the primary rRNA binding proteins, it binds directly to 16S rRNA where it nucleates assembly of the head domain of the 30S subunit. Is located at the subunit interface close to the decoding center, probably blocks exit of the E-site tRNA. The protein is Small ribosomal subunit protein uS7 of Bdellovibrio bacteriovorus (strain ATCC 15356 / DSM 50701 / NCIMB 9529 / HD100).